The primary structure comprises 458 residues: Repulsive guidance molecule A (458 aa).

The signal sequence occupies residues 1 to 53 (MGGPGPRRAGTSRERLVVTGRAGWMGMGRGAGRSALGFWPTLAFLLCSFPAAT). Positions 54–176 (SPCKILKCNS…NYTHCGLFGD (123 aa)) are cleaved as a propeptide — removed in mature form. Polar residues predominate over residues 121–133 (HNCSKDGPTSQPR). The segment at 121–149 (HNCSKDGPTSQPRLHTLPPAGDSQERSDS) is disordered. N-linked (GlcNAc...) asparagine glycosylation is found at N122 and N167. 2 cysteine pairs are disulfide-bonded: C153-C234 and C171-C323. N397 carries N-linked (GlcNAc...) asparagine glycosylation. A433 carries the GPI-anchor amidated alanine lipid modification. A propeptide spans 434-458 (AGLPLAPQPLLGALILLLALFPVFC) (removed in mature form).

The protein belongs to the repulsive guidance molecule (RGM) family. Interacts with NEO1, BMP2 and BMP4. Autocatalytically cleaved at low pH; the two chains remain linked via two disulfide bonds.

It localises to the cell membrane. In terms of biological role, member of the repulsive guidance molecule (RGM) family that performs several functions in the developing and adult nervous system. Regulates cephalic neural tube closure, inhibits neurite outgrowth and cortical neuron branching, and the formation of mature synapses. Binding to its receptor NEO1/neogenin induces activation of RHOA-ROCK1/Rho-kinase signaling pathway through UNC5B-ARHGEF12/LARG-PTK2/FAK1 cascade, leading to collapse of the neuronal growth cone and neurite outgrowth inhibition. Furthermore, RGMA binding to NEO1/neogenin leads to HRAS inactivation by influencing HRAS-PTK2/FAK1-AKT1 pathway. It also functions as a bone morphogenetic protein (BMP) coreceptor that may signal through SMAD1, SMAD5, and SMAD8. The polypeptide is Repulsive guidance molecule A (RGMA) (Macaca fascicularis (Crab-eating macaque)).